The primary structure comprises 288 residues: Phosphatidylglycerol--prolipoprotein diacylglyceryl transferase (288 aa).

The next 4 helical transmembrane spans lie at 8–28, 49–69, 79–99, and 109–129; these read IGPI…FVGI, AFVA…LFNL, ILAV…GIAG, and INPL…QAIG. Arginine 130 provides a ligand contact to a 1,2-diacyl-sn-glycero-3-phospho-(1'-sn-glycerol). Transmembrane regions (helical) follow at residues 203-223, 232-252, and 259-279; these read PAML…WFIL, GYMW…VSFF, and FFNF…SIFF.

It belongs to the Lgt family.

Its subcellular location is the cell inner membrane. It carries out the reaction L-cysteinyl-[prolipoprotein] + a 1,2-diacyl-sn-glycero-3-phospho-(1'-sn-glycerol) = an S-1,2-diacyl-sn-glyceryl-L-cysteinyl-[prolipoprotein] + sn-glycerol 1-phosphate + H(+). Its pathway is protein modification; lipoprotein biosynthesis (diacylglyceryl transfer). Catalyzes the transfer of the diacylglyceryl group from phosphatidylglycerol to the sulfhydryl group of the N-terminal cysteine of a prolipoprotein, the first step in the formation of mature lipoproteins. The protein is Phosphatidylglycerol--prolipoprotein diacylglyceryl transferase of Fusobacterium nucleatum subsp. nucleatum (strain ATCC 25586 / DSM 15643 / BCRC 10681 / CIP 101130 / JCM 8532 / KCTC 2640 / LMG 13131 / VPI 4355).